A 548-amino-acid chain; its full sequence is Probable malate:quinone oxidoreductase (548 aa).

The interval 521 to 548 is disordered; it reads DKPQAADSTPKPQLKPQPVQKEVADIAL. The span at 530 to 541 shows a compositional bias: low complexity; the sequence is PKPQLKPQPVQK.

The protein belongs to the MQO family. FAD is required as a cofactor.

The enzyme catalyses (S)-malate + a quinone = a quinol + oxaloacetate. It participates in carbohydrate metabolism; tricarboxylic acid cycle; oxaloacetate from (S)-malate (quinone route): step 1/1. This Shigella boydii serotype 4 (strain Sb227) protein is Probable malate:quinone oxidoreductase.